Here is a 257-residue protein sequence, read N- to C-terminus: Nickel import system ATP-binding protein NikD (257 aa).

The region spanning 4-245 (IDIQNLTIKN…HLHPYTERLI (242 aa)) is the ABC transporter domain. Residue 37 to 44 (GESGAGKS) coordinates ATP.

This sequence belongs to the ABC transporter superfamily. In terms of assembly, the complex is composed of two ATP-binding proteins (NikD and NikE), two transmembrane proteins (NikB and NikC) and a solute-binding protein (NikA).

It localises to the cell membrane. The catalysed reaction is Ni(2+)(out) + ATP + H2O = Ni(2+)(in) + ADP + phosphate + H(+). Part of the ABC transporter complex NikABCDE (Opp2) involved in nickel import. Probably responsible for energy coupling to the transport system. The sequence is that of Nickel import system ATP-binding protein NikD from Staphylococcus aureus (strain MRSA252).